The primary structure comprises 208 residues: uncharacterized protein (208 aa).

Disordered stretches follow at residues 74–117 and 181–208; these read FEYK…RDSP and ESKL…RKFK. Over residues 184–208 the composition is skewed to polar residues; it reads LGSSEDSGTDRFSSNTSGSSGRKFK.

This is an uncharacterized protein from Mus musculus (Mouse).